Reading from the N-terminus, the 559-residue chain is Probable 2-ketoarginine decarboxylase AruI (559 aa).

A thiamine diphosphate-binding site is contributed by E76.

Belongs to the TPP enzyme family. The cofactor is thiamine diphosphate.

The catalysed reaction is 5-guanidino-2-oxopentanoate + H(+) = 4-guanidinobutanal + CO2. Its pathway is amino-acid degradation; L-arginine degradation. Its function is as follows. Catalyzes the decarboxylation of 2-ketoarginine, leading to the formation of 4-guanidinobutyraldehyde. This is Probable 2-ketoarginine decarboxylase AruI (aruI) from Pseudomonas aeruginosa (strain ATCC 15692 / DSM 22644 / CIP 104116 / JCM 14847 / LMG 12228 / 1C / PRS 101 / PAO1).